Consider the following 144-residue polypeptide: 3-hydroxyacyl-[acyl-carrier-protein] dehydratase FabZ (144 aa).

The active site involves His-47.

This sequence belongs to the thioester dehydratase family. FabZ subfamily.

It localises to the cytoplasm. It catalyses the reaction a (3R)-hydroxyacyl-[ACP] = a (2E)-enoyl-[ACP] + H2O. Its function is as follows. Involved in unsaturated fatty acids biosynthesis. Catalyzes the dehydration of short chain beta-hydroxyacyl-ACPs and long chain saturated and unsaturated beta-hydroxyacyl-ACPs. The sequence is that of 3-hydroxyacyl-[acyl-carrier-protein] dehydratase FabZ from Nitrosomonas eutropha (strain DSM 101675 / C91 / Nm57).